Here is a 177-residue protein sequence, read N- to C-terminus: Large ribosomal subunit protein uL6 (177 aa).

The protein belongs to the universal ribosomal protein uL6 family. In terms of assembly, part of the 50S ribosomal subunit.

This protein binds to the 23S rRNA, and is important in its secondary structure. It is located near the subunit interface in the base of the L7/L12 stalk, and near the tRNA binding site of the peptidyltransferase center. This Brucella canis (strain ATCC 23365 / NCTC 10854 / RM-666) protein is Large ribosomal subunit protein uL6.